The chain runs to 281 residues: Inhibitor of growth protein 2 (281 aa).

Residues 49 to 101 (VLRELDNKYQETLKEIDDVYEKYKKEDDSNQKKRLQQHLQRALINSQELGDEK) adopt a coiled-coil conformation. The disordered stretch occupies residues 123–204 (SQCFQDPAES…AKQEREASPV (82 aa)). A compositionally biased stretch (basic and acidic residues) spans 131-141 (ESERASDKSKM). Residues 182 to 194 (KRSKSAKKKKRSK) are compositionally biased toward basic residues. A Glycyl lysine isopeptide (Lys-Gly) (interchain with G-Cter in SUMO1) cross-link involves residue K196. A PHD-type zinc finger spans residues 213–262 (PTYCLCNQVSYGEMIGCDNEQCPIEWFHFSCVSLTYKPKGKWYCPKCRGD). C216, C218, C229, C234, H240, C243, C256, and C259 together coordinate Zn(2+). Basic and acidic residues predominate over residues 261–275 (GDNEKTMDKSTEKTK). The tract at residues 261 to 281 (GDNEKTMDKSTEKTKKERRAR) is disordered. The PBR stretch occupies residues 265–281 (KTMDKSTEKTKKERRAR).

It belongs to the ING family. Interacts with H3K4me3 and to a lesser extent with H3K4me2. Component of a mSin3A-like complex at least consisting of SIN3A, HDAC1, HDAC2, RBBP4/RbAp48, RBBP7/RbAp46, SAP30 and ING2. In terms of processing, sumoylation enhances its association with SIN3A and is required for binding to some target gene promoters, this is the case for TMEM71.

It localises to the nucleus. In terms of biological role, seems to be involved in p53/TP53 activation and p53/TP53-dependent apoptotic pathways, probably by enhancing acetylation of p53/TP53. Component of a mSin3A-like corepressor complex, which is probably involved in deacetylation of nucleosomal histones. ING2 activity seems to be modulated by binding to phosphoinositides (PtdInsPs). In Mus musculus (Mouse), this protein is Inhibitor of growth protein 2 (Ing2).